We begin with the raw amino-acid sequence, 943 residues long: Coiled-coil and C2 domain-containing protein 1A (943 aa).

A Phosphothreonine modification is found at T91. Disordered regions lie at residues 186–250 (NEAD…CSPL) and 300–337 (DLSRLPPPPDQLSPEPPLPAAQPLTSASTLTRPEVPQP). Low complexity-rich tracts occupy residues 195-206 (ASGKGAAAGHSH) and 229-238 (APSTTTPTSA). At S248 the chain carries Phosphoserine. The segment covering 304 to 319 (LPPPPDQLSPEPPLPA) has biased composition (pro residues). The stretch at 339–385 (RNLLEALEQRMERYHVAAAQAKAKGDQRKARMHERIVKQYQDAIRAH) forms a coiled coil. Positions 430-483 (NHDEGSDDEEEETPKKQNTPAASTTQLKSSPSKAPPSGPAPAGKAAPKGTSNRA) are disordered. S435 carries the post-translational modification Phosphoserine. The span at 445–456 (KQNTPAASTTQL) shows a compositional bias: polar residues. Residues 469–478 (APAGKAAPKG) are compositionally biased toward low complexity. The stretch at 477–510 (KGTSNRAQQQLAFLEGRKKQLLQAALRAKQKNDV) forms a coiled coil. A C2 domain is found at 630-764 (RFEQRTFSVI…ETACEVHEIL (135 aa)).

This sequence belongs to the CC2D1 family. In terms of tissue distribution, highly expressed in brain, expression is enriched in the gray matter and strongest in the olfactory bulb.

The protein localises to the cytoplasm. Its subcellular location is the nucleus. It is found in the cytoskeleton. The protein resides in the microtubule organizing center. It localises to the centrosome. Functionally, transcription factor that binds specifically to the DRE (dual repressor element) and represses HTR1A gene transcription in neuronal cells. The combination of calcium and ATP specifically inactivates the binding with FRE. May play a role in the altered regulation of HTR1A associated with anxiety and major depression. Mediates HDAC-independent repression of HTR1A promoter in neuronal cell. Performs essential function in controlling functional maturation of synapses. This chain is Coiled-coil and C2 domain-containing protein 1A (Cc2d1a), found in Mus musculus (Mouse).